The chain runs to 433 residues: Enolase (433 aa).

Gln-167 serves as a coordination point for (2R)-2-phosphoglycerate. Glu-209 functions as the Proton donor in the catalytic mechanism. Asp-246, Glu-291, and Asp-318 together coordinate Mg(2+). (2R)-2-phosphoglycerate contacts are provided by Lys-343, Arg-372, Ser-373, and Lys-394. The active-site Proton acceptor is the Lys-343.

It belongs to the enolase family. As to quaternary structure, component of the RNA degradosome, a multiprotein complex involved in RNA processing and mRNA degradation. Mg(2+) is required as a cofactor.

It is found in the cytoplasm. The protein localises to the secreted. Its subcellular location is the cell surface. The enzyme catalyses (2R)-2-phosphoglycerate = phosphoenolpyruvate + H2O. The protein operates within carbohydrate degradation; glycolysis; pyruvate from D-glyceraldehyde 3-phosphate: step 4/5. Its function is as follows. Catalyzes the reversible conversion of 2-phosphoglycerate (2-PG) into phosphoenolpyruvate (PEP). It is essential for the degradation of carbohydrates via glycolysis. This is Enolase from Sodalis glossinidius (strain morsitans).